Consider the following 117-residue polypeptide: DNA-directed RNA polymerase subunit omega (117 aa).

This sequence belongs to the RNA polymerase subunit omega family. In terms of assembly, the RNAP catalytic core consists of 2 alpha, 1 beta, 1 beta' and 1 omega subunit. When a sigma factor is associated with the core the holoenzyme is formed, which can initiate transcription.

The enzyme catalyses RNA(n) + a ribonucleoside 5'-triphosphate = RNA(n+1) + diphosphate. Functionally, promotes RNA polymerase assembly. Latches the N- and C-terminal regions of the beta' subunit thereby facilitating its interaction with the beta and alpha subunits. The protein is DNA-directed RNA polymerase subunit omega of Roseobacter denitrificans (strain ATCC 33942 / OCh 114) (Erythrobacter sp. (strain OCh 114)).